The following is a 218-amino-acid chain: uncharacterized protein (218 aa).

3 disordered regions span residues 30 to 71 (FSHR…RSPP), 93 to 120 (SGRG…PRPD), and 133 to 209 (MEVE…PGFP). Residues 43–71 (PGAPAVVPAPVSAPRPASSPARSESRSPP) are compositionally biased toward low complexity. Over residues 94–110 (GRGGGGGGGGGARTGGG) the composition is skewed to gly residues. Positions 138–148 (PPHPPPQPQVC) are enriched in pro residues. A compositionally biased stretch (gly residues) spans 156-171 (PGHGRAGLPEGKGPGG). The span at 191–209 (RAPSPAAPRRGRLPAPGFP) shows a compositional bias: low complexity.

This is an uncharacterized protein from Homo sapiens (Human).